A 443-amino-acid chain; its full sequence is Adenylosuccinate synthetase (443 aa).

Residues 12-18 (GDEGKGK) and 40-42 (GHT) each bind GTP. D13 acts as the Proton acceptor in catalysis. The Mg(2+) site is built by D13 and G40. IMP-binding positions include 13–16 (DEGK), 38–41 (NAGH), T128, R142, Q223, T238, and R302. The Proton donor role is filled by H41. Substrate is bound at residue 298-304 (TTTGRRR). GTP-binding positions include R304, 330–332 (KLD), and 412–414 (SLG).

It belongs to the adenylosuccinate synthetase family. As to quaternary structure, homodimer. It depends on Mg(2+) as a cofactor.

The protein localises to the cytoplasm. It catalyses the reaction IMP + L-aspartate + GTP = N(6)-(1,2-dicarboxyethyl)-AMP + GDP + phosphate + 2 H(+). It functions in the pathway purine metabolism; AMP biosynthesis via de novo pathway; AMP from IMP: step 1/2. Its function is as follows. Plays an important role in the de novo pathway of purine nucleotide biosynthesis. Catalyzes the first committed step in the biosynthesis of AMP from IMP. This is Adenylosuccinate synthetase from Picosynechococcus sp. (strain ATCC 27264 / PCC 7002 / PR-6) (Agmenellum quadruplicatum).